Here is a 685-residue protein sequence, read N- to C-terminus: DNA ligase (685 aa).

NAD(+) is bound by residues 34 to 38 (DAVFD), 83 to 84 (SL), and Glu-113. Lys-115 acts as the N6-AMP-lysine intermediate in catalysis. 4 residues coordinate NAD(+): Arg-136, Glu-173, Lys-297, and Lys-321. The Zn(2+) site is built by Cys-415, Cys-418, Cys-433, and Cys-438. The BRCT domain occupies 607 to 685 (QEKLQFSGKT…EQELMTLISN (79 aa)).

Belongs to the NAD-dependent DNA ligase family. LigA subfamily. Mg(2+) serves as cofactor. The cofactor is Mn(2+).

It catalyses the reaction NAD(+) + (deoxyribonucleotide)n-3'-hydroxyl + 5'-phospho-(deoxyribonucleotide)m = (deoxyribonucleotide)n+m + AMP + beta-nicotinamide D-nucleotide.. DNA ligase that catalyzes the formation of phosphodiester linkages between 5'-phosphoryl and 3'-hydroxyl groups in double-stranded DNA using NAD as a coenzyme and as the energy source for the reaction. It is essential for DNA replication and repair of damaged DNA. The chain is DNA ligase from Prochlorococcus marinus (strain SARG / CCMP1375 / SS120).